The chain runs to 445 residues: Aminopeptidase C (445 aa).

Catalysis depends on residues Cys69, His363, and Asn385.

This sequence belongs to the peptidase C1 family. Homohexamer.

It catalyses the reaction Inactivates bleomycin B2 (a cytotoxic glycometallopeptide) by hydrolysis of a carboxyamide bond of beta-aminoalanine, but also shows general aminopeptidase activity. The specificity varies somewhat with source, but amino acid arylamides of Met, Leu and Ala are preferred.. The polypeptide is Aminopeptidase C (pepC) (Streptococcus thermophilus).